A 479-amino-acid polypeptide reads, in one-letter code: Pup--protein ligase (479 aa).

E17 serves as a coordination point for Mg(2+). Residue R62 participates in ATP binding. Y64 is a Mg(2+) binding site. Residue D66 is the Proton acceptor of the active site. E72 lines the Mg(2+) pocket. ATP contacts are provided by S75 and W432.

It belongs to the Pup ligase/Pup deamidase family. Pup-conjugating enzyme subfamily.

It catalyses the reaction ATP + [prokaryotic ubiquitin-like protein]-L-glutamate + [protein]-L-lysine = ADP + phosphate + N(6)-([prokaryotic ubiquitin-like protein]-gamma-L-glutamyl)-[protein]-L-lysine.. It functions in the pathway protein degradation; proteasomal Pup-dependent pathway. The protein operates within protein modification; protein pupylation. Catalyzes the covalent attachment of the prokaryotic ubiquitin-like protein modifier Pup to the proteasomal substrate proteins, thereby targeting them for proteasomal degradation. This tagging system is termed pupylation. The ligation reaction involves the side-chain carboxylate of the C-terminal glutamate of Pup and the side-chain amino group of a substrate lysine. This is Pup--protein ligase from Corynebacterium diphtheriae (strain ATCC 700971 / NCTC 13129 / Biotype gravis).